The primary structure comprises 335 residues: 5-dehydro-2-deoxygluconokinase (335 aa).

This sequence belongs to the carbohydrate kinase PfkB family.

It catalyses the reaction 5-dehydro-2-deoxy-D-gluconate + ATP = 6-phospho-5-dehydro-2-deoxy-D-gluconate + ADP + H(+). It functions in the pathway polyol metabolism; myo-inositol degradation into acetyl-CoA; acetyl-CoA from myo-inositol: step 5/7. Its function is as follows. Catalyzes the phosphorylation of 5-dehydro-2-deoxy-D-gluconate (2-deoxy-5-keto-D-gluconate or DKG) to 6-phospho-5-dehydro-2-deoxy-D-gluconate (DKGP). The chain is 5-dehydro-2-deoxygluconokinase from Geobacillus kaustophilus (strain HTA426).